The sequence spans 686 residues: Methionine--tRNA ligase (686 aa).

Residues 22–32 (PYANGPIHLGH) carry the 'HIGH' region motif. Residues C153, C156, C166, and C169 each coordinate Zn(2+). The short motif at 337 to 341 (KMSKS) is the 'KMSKS' region element. K340 contacts ATP. Residues 547-573 (MLEDSKESTPAPAAAKPKKAATQKADA) are disordered. The tRNA-binding domain maps to 584–686 (DFLKVKLRVA…SGAEPGMEVR (103 aa)).

It belongs to the class-I aminoacyl-tRNA synthetase family. MetG type 1 subfamily. As to quaternary structure, homodimer. The cofactor is Zn(2+).

Its subcellular location is the cytoplasm. It carries out the reaction tRNA(Met) + L-methionine + ATP = L-methionyl-tRNA(Met) + AMP + diphosphate. Functionally, is required not only for elongation of protein synthesis but also for the initiation of all mRNA translation through initiator tRNA(fMet) aminoacylation. In Alcanivorax borkumensis (strain ATCC 700651 / DSM 11573 / NCIMB 13689 / SK2), this protein is Methionine--tRNA ligase.